An 889-amino-acid polypeptide reads, in one-letter code: DNA gyrase subunit A (889 aa).

Residues 35-501 (LPDVRDGLKP…GFEDLEDEDL (467 aa)) form the Topo IIA-type catalytic domain. The active-site O-(5'-phospho-DNA)-tyrosine intermediate is the tyrosine 123. A GyrA-box motif is present at residues 528-534 (QNRGGRG). The disordered stretch occupies residues 811–889 (KEDAEDETNE…IQQSSDEDEE (79 aa)). Over residues 813 to 823 (DAEDETNEDEQ) the composition is skewed to acidic residues. Residues 863–875 (DGRIEVRQDFMDR) are compositionally biased toward basic and acidic residues. The span at 876 to 889 (VEEDIQQSSDEDEE) shows a compositional bias: acidic residues.

The protein belongs to the type II topoisomerase GyrA/ParC subunit family. Heterotetramer, composed of two GyrA and two GyrB chains. In the heterotetramer, GyrA contains the active site tyrosine that forms a transient covalent intermediate with DNA, while GyrB binds cofactors and catalyzes ATP hydrolysis.

Its subcellular location is the cytoplasm. The catalysed reaction is ATP-dependent breakage, passage and rejoining of double-stranded DNA.. Its function is as follows. A type II topoisomerase that negatively supercoils closed circular double-stranded (ds) DNA in an ATP-dependent manner to modulate DNA topology and maintain chromosomes in an underwound state. Negative supercoiling favors strand separation, and DNA replication, transcription, recombination and repair, all of which involve strand separation. Also able to catalyze the interconversion of other topological isomers of dsDNA rings, including catenanes and knotted rings. Type II topoisomerases break and join 2 DNA strands simultaneously in an ATP-dependent manner. This Staphylococcus aureus (strain Mu50 / ATCC 700699) protein is DNA gyrase subunit A.